Here is a 171-residue protein sequence, read N- to C-terminus: ATP synthase subunit b (171 aa).

A helical transmembrane segment spans residues 3 to 23 (KFLFFIFVFVGISFAGDDTAT).

It belongs to the ATPase B chain family. F-type ATPases have 2 components, F(1) - the catalytic core - and F(0) - the membrane proton channel. F(1) has five subunits: alpha(3), beta(3), gamma(1), delta(1), epsilon(1). F(0) has three main subunits: a(1), b(2) and c(10-14). The alpha and beta chains form an alternating ring which encloses part of the gamma chain. F(1) is attached to F(0) by a central stalk formed by the gamma and epsilon chains, while a peripheral stalk is formed by the delta and b chains.

Its subcellular location is the cell inner membrane. Functionally, f(1)F(0) ATP synthase produces ATP from ADP in the presence of a proton or sodium gradient. F-type ATPases consist of two structural domains, F(1) containing the extramembraneous catalytic core and F(0) containing the membrane proton channel, linked together by a central stalk and a peripheral stalk. During catalysis, ATP synthesis in the catalytic domain of F(1) is coupled via a rotary mechanism of the central stalk subunits to proton translocation. In terms of biological role, component of the F(0) channel, it forms part of the peripheral stalk, linking F(1) to F(0). In Campylobacter hominis (strain ATCC BAA-381 / DSM 21671 / CCUG 45161 / LMG 19568 / NCTC 13146 / CH001A), this protein is ATP synthase subunit b.